The chain runs to 142 residues: MKTYTAKPETVQRDWFVVDAAGQTLGRLATEIARRLRGKHKPEYTPHVDTGDYIVVINAEQVRVTGAKTTDKMYYHHSGFPGGIKSINFEKLIAKAPERVIETAVKGMLPKNPLGRDMYRKLKVYKGASHPHTAQQPQELKI.

This sequence belongs to the universal ribosomal protein uL13 family. In terms of assembly, part of the 50S ribosomal subunit.

Its function is as follows. This protein is one of the early assembly proteins of the 50S ribosomal subunit, although it is not seen to bind rRNA by itself. It is important during the early stages of 50S assembly. This Pseudomonas aeruginosa (strain LESB58) protein is Large ribosomal subunit protein uL13.